We begin with the raw amino-acid sequence, 664 residues long: E3 ubiquitin-protein ligase RNF139 (664 aa).

N-acetylalanine is present on Ala2. The next 12 helical transmembrane spans lie at 51–71 (IVLQIFLRLLGIFVSSIVLIL), 85–105 (AFLLAATSVLVNYYASLHIDF), 125–145 (SLWMALIVLQLTFGIGYVTLL), 154–174 (LIILDLLVPVIGLITELPLHI), 178–198 (LVFTSSLILTLNTVLVLAVKL), 293–313 (GMSAVISSVAHYLGLGILAFI), 323–343 (LGFVAPVLFFILALQTGLSGL), 356–376 (MCLLLTAVLHFIHGMTDPVLM), 390–410 (FPVLFVSACLFILPVLLSYVL), 420–440 (LFAATAFCVELCLKVIVSLTV), 469–489 (SIIVFIFGVVMFGNGAYTMMF), and 495–512 (IRAFMMCLHAYFNIYLQA). The RING-type; atypical zinc finger occupies 547-586 (CAICYHEFTTSARITPCNHYFHALCLRKWLYIQDTCPMCH). The span at 599–610 (SNVSNNNGFTPP) shows a compositional bias: polar residues. Residues 599 to 664 (SNVSNNNGFT…AAEEFNDDTD (66 aa)) form a disordered region. Positions 616–628 (EAVREAAAESDRE) are enriched in basic and acidic residues. Positions 629–639 (LNEDDSTDCDD) are enriched in acidic residues. Ser634 is modified (phosphoserine). Thr635 and Thr663 each carry phosphothreonine.

As to quaternary structure, interacts with VHL. Interacts with MHC class I and HM13. Component of SCAP-SREBP complex composed of SREBF2, SCAP and RNF139; the complex hampers the interaction between SCAP and SEC24B, thereby reducing SREBF2 proteolytic processing. Interacts with SREBF2 (via C-terminal domain). Interacts with SCAP; the interaction inhibits the interaction of SCAP with SEC24B and hampering the ER to Golgi transport of the SCAP-SREBP complex. Interacts with SEC24B. Interacts with INSIG1 and INSIG2. Interacts with EIF3F and EIF3H; the interaction leads to protein translation inhibitions in a ubiquitination-dependent manner. Interacts with XBP1; the interaction induces ubiquitination and degradation of XBP1. Interacts with AUP1, AMFR and UBE2G2; interaction with AUP1 facilitates interaction of RNF139 with ubiquitin-conjugating enzyme UBE2G2 and ubiquitin ligase AMFR/gp78, leading to sterol-induced ubiquitination of HMGCR and its subsequent proteasomal degradation. Autoubiquitinated. Ubiquitination is induced by sterol and leads to ist degradation via the ubiquitin-proteasome pathway.

It localises to the endoplasmic reticulum membrane. It carries out the reaction S-ubiquitinyl-[E2 ubiquitin-conjugating enzyme]-L-cysteine + [acceptor protein]-L-lysine = [E2 ubiquitin-conjugating enzyme]-L-cysteine + N(6)-ubiquitinyl-[acceptor protein]-L-lysine.. The protein operates within protein modification; protein ubiquitination. E3-ubiquitin ligase; acts as a negative regulator of cell proliferation through mechanisms involving G2/M arrest and cell death. Required for MHC class I ubiquitination in cells expressing the cytomegalovirus protein US2 before dislocation from the endoplasmic reticulum (ER). Affects SREBP processing by hindering the SREBP-SCAP complex translocation from the ER to the Golgi, thereby reducing SREBF2 target gene expression. Involved in the sterol-accelerated degradation of HMGCR. This is achieved through binding to INSIG1 and/or INSIG2 at the ER membrane. In addition, interaction of RNF139 with AUP1 facilitates interaction of RNF139 with ubiquitin-conjugating enzyme UBE2G2 and ubiquitin ligase AMFR, leading to ubiquitination of HMGCR. The ubiquitinated HMGCR is then released from the ER by the complex into the cytosol for subsequent destruction. Required for INSIG1 ubiquitination. May be required for EIF3 complex ubiquitination. This is E3 ubiquitin-protein ligase RNF139 (RNF139) from Pongo abelii (Sumatran orangutan).